A 400-amino-acid chain; its full sequence is Elongation factor Tu (400 aa).

Residues 10–210 (KPHVNVGTIG…ALDSYIPEPV (201 aa)) enclose the tr-type G domain. The interval 19 to 26 (GHVDHGKT) is G1. Residue 19 to 26 (GHVDHGKT) coordinates GTP. Threonine 26 is a Mg(2+) binding site. Residues 66 to 70 (ILTIA) are G2. Positions 87–90 (DCPG) are G3. GTP contacts are provided by residues 87–91 (DCPGH) and 142–145 (NKCD). Positions 142-145 (NKCD) are G4. The tract at residues 180 to 182 (SAI) is G5.

Belongs to the TRAFAC class translation factor GTPase superfamily. Classic translation factor GTPase family. EF-Tu/EF-1A subfamily. Monomer.

It localises to the cytoplasm. It catalyses the reaction GTP + H2O = GDP + phosphate + H(+). Its function is as follows. GTP hydrolase that promotes the GTP-dependent binding of aminoacyl-tRNA to the A-site of ribosomes during protein biosynthesis. This chain is Elongation factor Tu, found in Gemmatimonas aurantiaca (strain DSM 14586 / JCM 11422 / NBRC 100505 / T-27).